A 253-amino-acid chain; its full sequence is Acetylglutamate kinase (253 aa).

Substrate is bound by residues Gly37–Gly38, Arg59, and Asn149.

Belongs to the acetylglutamate kinase family. ArgB subfamily.

It is found in the cytoplasm. It carries out the reaction N-acetyl-L-glutamate + ATP = N-acetyl-L-glutamyl 5-phosphate + ADP. It participates in amino-acid biosynthesis; L-arginine biosynthesis; N(2)-acetyl-L-ornithine from L-glutamate: step 2/4. In terms of biological role, catalyzes the ATP-dependent phosphorylation of N-acetyl-L-glutamate. This is Acetylglutamate kinase from Rubrobacter xylanophilus (strain DSM 9941 / JCM 11954 / NBRC 16129 / PRD-1).